A 196-amino-acid polypeptide reads, in one-letter code: DnaA initiator-associating protein DiaA (196 aa).

The region spanning 34–196 (LVQSLLNGNK…DNTLFPHQDD (163 aa)) is the SIS domain.

Belongs to the SIS family. DiaA subfamily. Homotetramer; dimer of dimers.

Required for the timely initiation of chromosomal replication via direct interactions with the DnaA initiator protein. The protein is DnaA initiator-associating protein DiaA of Shigella flexneri serotype 5b (strain 8401).